A 144-amino-acid chain; its full sequence is Nucleoside diphosphate kinase (144 aa).

Residues K11, F59, R87, T93, R104, and N114 each coordinate ATP. The Pros-phosphohistidine intermediate role is filled by H117.

It belongs to the NDK family. Homotetramer. The cofactor is Mg(2+).

The protein resides in the cytoplasm. The catalysed reaction is a 2'-deoxyribonucleoside 5'-diphosphate + ATP = a 2'-deoxyribonucleoside 5'-triphosphate + ADP. The enzyme catalyses a ribonucleoside 5'-diphosphate + ATP = a ribonucleoside 5'-triphosphate + ADP. In terms of biological role, major role in the synthesis of nucleoside triphosphates other than ATP. The ATP gamma phosphate is transferred to the NDP beta phosphate via a ping-pong mechanism, using a phosphorylated active-site intermediate. The sequence is that of Nucleoside diphosphate kinase from Aliivibrio fischeri (strain ATCC 700601 / ES114) (Vibrio fischeri).